We begin with the raw amino-acid sequence, 347 residues long: Vitellogenin-3 (347 aa).

An N-terminal signal peptide occupies residues 1-15 (MRGFILALVLALVGA). N-linked (GlcNAc...) asparagine glycosylation occurs at Asn-80. Residues 104-118 (PSATPLSSSSSTDSS) are compositionally biased toward low complexity. 2 disordered regions span residues 104-174 (PSAT…DKHC) and 200-234 (QDPR…MFLG). The segment covering 124–133 (PGNKRDKDEI) has biased composition (basic and acidic residues). Over residues 144 to 163 (SSSSSSSSSTGSGSSKTCSS) the composition is skewed to low complexity. Positions 164 to 174 (SREDSSRDKHC) are enriched in basic and acidic residues. An N-linked (GlcNAc...) asparagine glycan is attached at Asn-208. A compositionally biased stretch (low complexity) spans 209-219 (SSISSSSSSSS).

Phosvitin, an egg yolk storage protein, is one of the most highly phosphorylated (10%) proteins in nature. Post-translationally, cathepsin D is responsible for intraoocytic processing of vitellogenin. In terms of processing, may contain intrachain disulfide bonds. In terms of tissue distribution, produced by the liver, secreted into the blood and then sequestered by receptor mediated endocytosis into growing oocytes, where it is generally cleaved, giving rise to the respective yolk components.

Precursor of the egg-yolk proteins that are sources of nutrients during early development of oviparous organisms. Functionally, phosvitin is believed to be of importance in sequestering calcium, iron and other cations for the developing embryo. This chain is Vitellogenin-3 (VTG3), found in Gallus gallus (Chicken).